The sequence spans 404 residues: Probable tRNA sulfurtransferase (404 aa).

In terms of domain architecture, THUMP spans 61–166; it reads EAVSERLKDV…SGYSYIMCDE (106 aa). Residues 184-185, 209-210, arginine 266, glycine 288, and glutamine 297 contribute to the ATP site; these read LL and HF.

This sequence belongs to the ThiI family.

It localises to the cytoplasm. It catalyses the reaction [ThiI sulfur-carrier protein]-S-sulfanyl-L-cysteine + a uridine in tRNA + 2 reduced [2Fe-2S]-[ferredoxin] + ATP + H(+) = [ThiI sulfur-carrier protein]-L-cysteine + a 4-thiouridine in tRNA + 2 oxidized [2Fe-2S]-[ferredoxin] + AMP + diphosphate. It carries out the reaction [ThiS sulfur-carrier protein]-C-terminal Gly-Gly-AMP + S-sulfanyl-L-cysteinyl-[cysteine desulfurase] + AH2 = [ThiS sulfur-carrier protein]-C-terminal-Gly-aminoethanethioate + L-cysteinyl-[cysteine desulfurase] + A + AMP + 2 H(+). Its pathway is cofactor biosynthesis; thiamine diphosphate biosynthesis. In terms of biological role, catalyzes the ATP-dependent transfer of a sulfur to tRNA to produce 4-thiouridine in position 8 of tRNAs, which functions as a near-UV photosensor. Also catalyzes the transfer of sulfur to the sulfur carrier protein ThiS, forming ThiS-thiocarboxylate. This is a step in the synthesis of thiazole, in the thiamine biosynthesis pathway. The sulfur is donated as persulfide by IscS. The sequence is that of Probable tRNA sulfurtransferase from Bacillus cereus (strain AH187).